The chain runs to 405 residues: Amino sugar nitrososynthase DnmZ (405 aa).

Glutamate 117 and arginine 332 together coordinate dTDP.

The protein belongs to the acyl-CoA dehydrogenase family. As to quaternary structure, homotetramer. Requires FAD as cofactor.

Its pathway is antibiotic biosynthesis. Functionally, nitrososynthase involved in the biosynthesis of baumycin. Catalyzes the double-oxidation of TDP-L-epi-vancosamine to TDP-L-epi-vancosonitrose. The rapid turnover of TDP-L-epi-vancosamine suggests that this compound, or a closely related analog, is the natural substrate for DnmZ. Can also catalyze the double-oxidation of TDP-L-evernosamine to TDP-L-evernitrosose. The chain is Amino sugar nitrososynthase DnmZ from Streptomyces peucetius.